A 56-amino-acid chain; its full sequence is Potassium channel toxin alpha-KTx 9.2 (56 aa).

The signal sequence occupies residues M1–A28. 3 disulfide bridges follow: C31/C47, C34/C52, and C38/C54.

Expressed by the venom gland.

Its subcellular location is the secreted. Its function is as follows. Blocks small conductance calcium-activated potassium channels (KCNN, SK). Low toxicity by intracerebroventricular injection into mice. This Olivierus martensii (Manchurian scorpion) protein is Potassium channel toxin alpha-KTx 9.2.